The chain runs to 376 residues: MKIHEYQAKEIFSKYGIPVERHTLCRTAAGAVAAYKRMGSDRVVIKAQVLTGGRGKAGGVKLVDNTEDTYQEAKNILGMSIKGLPVNQILVSEAVDIAAEYYVSFTIDRNTRSVILMMSASGGMDIEEVARQSPEKIIRYAIDPFIGLPDYLARRFAFSLFPHIEQAGRMAAILQALYKIFMENDASLVEVNPLALTAKGILMAIDAKIVFDDNALYRHPDVLSLFDPTEEEKVEADAKNKGFSYVHMDGNIGCMVNGAGLAMATMDMIKLHGGNPANFLDIGGSSNPVKVVEAMKLLLQDEKVKVVLINIFGGITRCDDVAIGLIQAFDQIKSDIPVIVRLTGTNEHLGRDLLRNHSRFQIATTMQEAALMAIKS.

Positions 9 to 237 (KEIFSKYGIP…PTEEEKVEAD (229 aa)) constitute an ATP-grasp domain. Residues lysine 46, 53-55 (GRG), valine 95, and glutamate 100 contribute to the ATP site. Residues asparagine 192 and aspartate 206 each coordinate Mg(2+). Substrate is bound by residues asparagine 257 and 314–316 (GIT).

It belongs to the succinate/malate CoA ligase beta subunit family. In terms of assembly, heterotetramer of two alpha and two beta subunits. Requires Mg(2+) as cofactor.

The enzyme catalyses succinate + ATP + CoA = succinyl-CoA + ADP + phosphate. The catalysed reaction is GTP + succinate + CoA = succinyl-CoA + GDP + phosphate. It participates in carbohydrate metabolism; tricarboxylic acid cycle; succinate from succinyl-CoA (ligase route): step 1/1. Its function is as follows. Succinyl-CoA synthetase functions in the citric acid cycle (TCA), coupling the hydrolysis of succinyl-CoA to the synthesis of either ATP or GTP and thus represents the only step of substrate-level phosphorylation in the TCA. The beta subunit provides nucleotide specificity of the enzyme and binds the substrate succinate, while the binding sites for coenzyme A and phosphate are found in the alpha subunit. This Bacteroides thetaiotaomicron (strain ATCC 29148 / DSM 2079 / JCM 5827 / CCUG 10774 / NCTC 10582 / VPI-5482 / E50) protein is Succinate--CoA ligase [ADP-forming] subunit beta.